The chain runs to 70 residues: Large ribosomal subunit protein bL31 (70 aa).

Zn(2+)-binding residues include C16, C18, C37, and C40.

It belongs to the bacterial ribosomal protein bL31 family. Type A subfamily. In terms of assembly, part of the 50S ribosomal subunit. The cofactor is Zn(2+).

Its function is as follows. Binds the 23S rRNA. This chain is Large ribosomal subunit protein bL31, found in Shewanella sp. (strain MR-4).